Reading from the N-terminus, the 298-residue chain is UPF0696 protein C11orf68 homolog (298 aa).

Residues 1-10 are compositionally biased toward low complexity; that stretch reads MAAAAAAVAG. Residues 1–66 are disordered; sequence MAAAAAAVAG…EDSPGGREDG (66 aa). Residues 11–25 show a composition bias toward gly residues; the sequence is AGRGGGGGGGGGGAA. A compositionally biased stretch (basic and acidic residues) spans 41-50; it reads ERSEGRRMEP.

This sequence belongs to the UPF0696 family.

The polypeptide is UPF0696 protein C11orf68 homolog (Bles03) (Mus musculus (Mouse)).